Reading from the N-terminus, the 1239-residue chain is MASAMESDSGGGSGGADAQPPLAEVDGGLARVTRQLLLSGDDPAARLRALMPLELGIFGLGDLAQPVLVRDFLNTLTLMSGHAYPAAVLRHHAYYLLRAASFSRRSFGLGHLEAALDVLASSLPPTTASPATDDPLDGSRLIADTRALAAEYRRIIEEGSGEVLAVSGPTATFAFVEELVADTYLARWDAFPREGLSFYAFNAAKTTLGRWLVTVYAETNRYPWAAAGQGQPTAADIKAMAVELVEHSGGRAGGGEGEESGGGGLFHRPESLSSVVASLPLARRRAVEILGVYAEASGGQTPPVAAVPVLAFDAARLRLLEPSGALFYDYVYEALLWDQTYGVPDSVIEAFLAGMAAEMEALAARVQEAAGSRASFSPAAIEQVATVLLSAGLNETVAGDYAMMLASVPRVSRSRWRWLEATAALLESLSGFALHFFRLLPTASPTSRFARVARAAYLRAEAEAKDRRARRTSGPSTPAATAVGVGAVADPWDAVTPLRIFIVPPPAAEYEQVAGDLSSELLRSLLWVRYSRLWQAPAPAPALPCKPPLLPGEQGRRQWTAAVAAVPRTDVEAYCRSLRAGQTARADPAYVRSPFFPAAFIEFQIWPALRRVLSNELPKTRSLAALRWLVSFGSDLALPSPELTRARRPLELIYATVWEIYDGAPPMPGESPQAVGLRPLNLEGEGKAGDAGADGAEDEEGGGPWGLSSHDAVLRIMDAVREVSGIISETISASERAAEAPPLAWPTSLFSLLFTLRYSTTAESLGLATRRFLVSGETLSEDISRLTGAAWRLCSRPLLYDAETGRVQIPLATEEEEEAVVAVKEKSVSSSPRHYSTDLQTLKSVVEGIQDVCRDAAARWALATADTATLRRRLLVPALRESRGIADHPLWAHTSEPLRPDLEELNERVEHALELGYSLTGALRRSVAYRFRDYTFARLFQPPAIDAERAEAIVRRDARPPPVFTPAPRRLPQGGADTPPPLSMDDIMYLGKSICKALVDVLDHHPAAPETTPIKTYTPAMDLNPEQITVTPRSPSVLAAFARTARVQTHHLVPALTDDSPSPVGQTPPPFRILPAKKLAAILLGNGRNASKRRASRDLSPPPHGRWRAVLDSSPFSFSSSDFSDQDEGEGGKADLRGVPGGGGGGEGAYEEERERPSDIDTAARARKVETSCPRRRSPRTTPSPSRRASGGGGGPDRGEAEAHTCPPYLSAAAAASRVRPRTRRGATRRPPRPTAEDE.

Disordered regions lie at residues 1–20, 669–704, 959–980, and 1087–1239; these read MASA…DAQP, GESP…GGGP, RPPP…DTPP, and GRNA…AEDE. The segment at 615–1239 is interaction with large tegument protein; it reads NELPKTRSLA…RPPRPTAEDE (625 aa). Residues 1112-1123 are compositionally biased toward low complexity; it reads DSSPFSFSSSDF. Over residues 1139 to 1148 the composition is skewed to gly residues; it reads VPGGGGGGEG. Over residues 1151–1170 the composition is skewed to basic and acidic residues; the sequence is EEERERPSDIDTAARARKVE. A compositionally biased stretch (low complexity) spans 1180 to 1189; that stretch reads RTTPSPSRRA. Basic residues predominate over residues 1219-1232; sequence VRPRTRRGATRRPP.

It belongs to the herpesviridae inner tegument protein family. Interacts (via C-terminus) with the large tegument protein/LTP (via N-terminus).

It localises to the virion tegument. It is found in the host cytoplasm. Its subcellular location is the host nucleus. The protein resides in the host Golgi apparatus. The protein localises to the host trans-Golgi network. In terms of biological role, plays an essential role in cytoplasmic secondary envelopment during viral egress. Interacts with the capsid via the large tegument protein/LTP and participates in its transport to the host trans-Golgi network (TGN) where secondary envelopment occurs. Modulates tegumentation and capsid accumulation at the viral assembly complex. This Homo sapiens (Human) protein is Inner tegument protein.